We begin with the raw amino-acid sequence, 107 residues long: Replication restart protein PriB (107 aa).

The 100-residue stretch at 8–107 (IENRLSLIGV…LHAEHIELLD (100 aa)) folds into the SSB domain.

It belongs to the PriB family. As to quaternary structure, homodimer. Interacts with PriA and DnaT. Component of the replication restart primosome. Primosome assembly occurs via a 'hand-off' mechanism. PriA binds to replication forks, subsequently PriB then DnaT bind; DnaT then displaces ssDNA to generate the helicase loading substrate.

Functionally, involved in the restart of stalled replication forks, which reloads the replicative helicase on sites other than the origin of replication; the PriA-PriB pathway is the major replication restart pathway. During primosome assembly it facilitates complex formation between PriA and DnaT on DNA; stabilizes PriA on DNA. Stimulates the DNA unwinding activity of PriA helicase. In Actinobacillus succinogenes (strain ATCC 55618 / DSM 22257 / CCUG 43843 / 130Z), this protein is Replication restart protein PriB.